The chain runs to 473 residues: Glutamate--tRNA ligase (473 aa).

Residues Pro11–Gly21 carry the 'HIGH' region motif. The short motif at Lys240–Arg244 is the 'KMSKS' region element. Position 243 (Lys243) interacts with ATP.

It belongs to the class-I aminoacyl-tRNA synthetase family. Glutamate--tRNA ligase type 1 subfamily. In terms of assembly, monomer.

The protein resides in the cytoplasm. It catalyses the reaction tRNA(Glu) + L-glutamate + ATP = L-glutamyl-tRNA(Glu) + AMP + diphosphate. Functionally, catalyzes the attachment of glutamate to tRNA(Glu) in a two-step reaction: glutamate is first activated by ATP to form Glu-AMP and then transferred to the acceptor end of tRNA(Glu). The sequence is that of Glutamate--tRNA ligase from Rhodopseudomonas palustris (strain ATCC BAA-98 / CGA009).